Here is a 136-residue protein sequence, read N- to C-terminus: Keratin-associated protein 4-2 (136 aa).

20 repeat units span residues 5-9 (CCGSV), 20-24 (CCRPS), 25-29 (CCQTT), 30-34 (CCRTT), 35-39 (CCRPS), 40-44 (CCVSS), 45-49 (CCRPQ), 50-54 (CCQSV), 55-59 (CCQPT), 60-64 (CCSPS), 65-69 (CCQTT), 70-74 (CCRTT), 75-79 (CCRPS), 80-84 (CCVSS), 90-94 (CCQSV), 95-99 (YCQPT), 100-104 (CCRPS), 110-114 (CCRTT), 120-124 (CCVST), and 125-129 (CCRPT). The 20 X 5 AA repeats OF C-C-[GRQVS]-[SPT]-[VSTQ] stretch occupies residues 5-129 (CCGSVCSDQG…CCVSTCCRPT (125 aa)).

This sequence belongs to the KRTAP type 4 family. Interacts with hair keratins.

Its function is as follows. In the hair cortex, hair keratin intermediate filaments are embedded in an interfilamentous matrix, consisting of hair keratin-associated proteins (KRTAP), which are essential for the formation of a rigid and resistant hair shaft through their extensive disulfide bond cross-linking with abundant cysteine residues of hair keratins. The matrix proteins include the high-sulfur and high-glycine-tyrosine keratins. The protein is Keratin-associated protein 4-2 (KRTAP4-2) of Homo sapiens (Human).